We begin with the raw amino-acid sequence, 502 residues long: Glutamate--tRNA ligase (502 aa).

The short motif at proline 21–methionine 31 is the 'HIGH' region element. The 'KMSKS' region signature appears at lysine 265–arginine 269. Lysine 268 is a binding site for ATP.

Belongs to the class-I aminoacyl-tRNA synthetase family. Glutamate--tRNA ligase type 1 subfamily. As to quaternary structure, monomer.

The protein resides in the cytoplasm. The enzyme catalyses tRNA(Glu) + L-glutamate + ATP = L-glutamyl-tRNA(Glu) + AMP + diphosphate. In terms of biological role, catalyzes the attachment of glutamate to tRNA(Glu) in a two-step reaction: glutamate is first activated by ATP to form Glu-AMP and then transferred to the acceptor end of tRNA(Glu). In Mycobacterium leprae (strain TN), this protein is Glutamate--tRNA ligase.